The primary structure comprises 728 residues: Phosphoribosylformylglycinamidine synthase subunit PurL (728 aa).

His-40 is a catalytic residue. Residues Tyr-43 and Lys-82 each contribute to the ATP site. Position 84 (Glu-84) interacts with Mg(2+). Substrate contacts are provided by residues 85-88 (SHNH) and Arg-107. His-86 functions as the Proton acceptor in the catalytic mechanism. Mg(2+) is bound at residue Asp-108. Residue Gln-231 participates in substrate binding. Asp-259 is a Mg(2+) binding site. 303–305 (ESQ) is a substrate binding site. ATP contacts are provided by Asn-483 and Gly-520. A Mg(2+)-binding site is contributed by Asn-521. Position 523 (Ser-523) interacts with substrate.

Belongs to the FGAMS family. As to quaternary structure, monomer. Part of the FGAM synthase complex composed of 1 PurL, 1 PurQ and 2 PurS subunits.

It localises to the cytoplasm. It carries out the reaction N(2)-formyl-N(1)-(5-phospho-beta-D-ribosyl)glycinamide + L-glutamine + ATP + H2O = 2-formamido-N(1)-(5-O-phospho-beta-D-ribosyl)acetamidine + L-glutamate + ADP + phosphate + H(+). It participates in purine metabolism; IMP biosynthesis via de novo pathway; 5-amino-1-(5-phospho-D-ribosyl)imidazole from N(2)-formyl-N(1)-(5-phospho-D-ribosyl)glycinamide: step 1/2. Its function is as follows. Part of the phosphoribosylformylglycinamidine synthase complex involved in the purines biosynthetic pathway. Catalyzes the ATP-dependent conversion of formylglycinamide ribonucleotide (FGAR) and glutamine to yield formylglycinamidine ribonucleotide (FGAM) and glutamate. The FGAM synthase complex is composed of three subunits. PurQ produces an ammonia molecule by converting glutamine to glutamate. PurL transfers the ammonia molecule to FGAR to form FGAM in an ATP-dependent manner. PurS interacts with PurQ and PurL and is thought to assist in the transfer of the ammonia molecule from PurQ to PurL. The chain is Phosphoribosylformylglycinamidine synthase subunit PurL from Carboxydothermus hydrogenoformans (strain ATCC BAA-161 / DSM 6008 / Z-2901).